The chain runs to 548 residues: Probable malate:quinone oxidoreductase (548 aa).

A disordered region spans residues 521–548 (DKPQAADSTPKPQLKPKPVQKEVADIAL). The segment covering 539–548 (VQKEVADIAL) has biased composition (basic and acidic residues).

Belongs to the MQO family. FAD is required as a cofactor.

The catalysed reaction is (S)-malate + a quinone = a quinol + oxaloacetate. It functions in the pathway carbohydrate metabolism; tricarboxylic acid cycle; oxaloacetate from (S)-malate (quinone route): step 1/1. In Escherichia coli (strain ATCC 8739 / DSM 1576 / NBRC 3972 / NCIMB 8545 / WDCM 00012 / Crooks), this protein is Probable malate:quinone oxidoreductase.